The chain runs to 415 residues: Dynein assembly factor with WD repeat domains 1 (415 aa).

8 WD repeats span residues 90 to 129 (AHIL…ELNT), 132 to 174 (GHRN…HTFR), 175 to 214 (GHTA…EVYT), 217 to 256 (GHSA…KVNI), 259 to 298 (GHCA…CVAT), 301 to 340 (GHDD…CIAK), 343 to 384 (GHEG…QVLE), and 386 to 415 (HTDE…RIWR).

This sequence belongs to the WD repeat WDR69 family. As to quaternary structure, interacts with IFT46.

The protein localises to the cytoplasm. The protein resides in the cytoskeleton. It is found in the flagellum basal body. It localises to the flagellum axoneme. Functionally, required for axonemal dynein assembly and ciliary motility in ciliated organs, including Kupffer's vesicle, during embryogenesis. Facilitates the onset of robust cilia motility during development. This is Dynein assembly factor with WD repeat domains 1 from Homo sapiens (Human).